Consider the following 247-residue polypeptide: Uridylate kinase (247 aa).

18 to 21 (KLSG) serves as a coordination point for ATP. G60 serves as a coordination point for UMP. Residues G61 and R65 each coordinate ATP. UMP-binding positions include D80 and 141–148 (TGNPFFTT). Residues T168, Y174, and D177 each contribute to the ATP site.

Belongs to the UMP kinase family. In terms of assembly, homohexamer.

The protein resides in the cytoplasm. It carries out the reaction UMP + ATP = UDP + ADP. It functions in the pathway pyrimidine metabolism; CTP biosynthesis via de novo pathway; UDP from UMP (UMPK route): step 1/1. With respect to regulation, inhibited by UTP. In terms of biological role, catalyzes the reversible phosphorylation of UMP to UDP. The protein is Uridylate kinase of Stutzerimonas stutzeri (strain A1501) (Pseudomonas stutzeri).